Here is a 954-residue protein sequence, read N- to C-terminus: Glycine dehydrogenase (decarboxylating) (954 aa).

Position 704 is an N6-(pyridoxal phosphate)lysine (K704).

The protein belongs to the GcvP family. As to quaternary structure, the glycine cleavage system is composed of four proteins: P, T, L and H. It depends on pyridoxal 5'-phosphate as a cofactor.

It carries out the reaction N(6)-[(R)-lipoyl]-L-lysyl-[glycine-cleavage complex H protein] + glycine + H(+) = N(6)-[(R)-S(8)-aminomethyldihydrolipoyl]-L-lysyl-[glycine-cleavage complex H protein] + CO2. In terms of biological role, the glycine cleavage system catalyzes the degradation of glycine. The P protein binds the alpha-amino group of glycine through its pyridoxal phosphate cofactor; CO(2) is released and the remaining methylamine moiety is then transferred to the lipoamide cofactor of the H protein. This is Glycine dehydrogenase (decarboxylating) from Agrobacterium fabrum (strain C58 / ATCC 33970) (Agrobacterium tumefaciens (strain C58)).